A 357-amino-acid chain; its full sequence is S-adenosylmethionine:tRNA ribosyltransferase-isomerase (357 aa).

Belongs to the QueA family. In terms of assembly, monomer.

The protein resides in the cytoplasm. The enzyme catalyses 7-aminomethyl-7-carbaguanosine(34) in tRNA + S-adenosyl-L-methionine = epoxyqueuosine(34) in tRNA + adenine + L-methionine + 2 H(+). The protein operates within tRNA modification; tRNA-queuosine biosynthesis. In terms of biological role, transfers and isomerizes the ribose moiety from AdoMet to the 7-aminomethyl group of 7-deazaguanine (preQ1-tRNA) to give epoxyqueuosine (oQ-tRNA). This chain is S-adenosylmethionine:tRNA ribosyltransferase-isomerase, found in Buchnera aphidicola subsp. Acyrthosiphon pisum (strain APS) (Acyrthosiphon pisum symbiotic bacterium).